A 391-amino-acid chain; its full sequence is Origin recognition complex subunit 2 (391 aa).

The tract at residues 1–43 (MEEYTDSGEDKNVYSDDDNDYFTASTQNNRTSKNTDSSPLDPK) is disordered. Positions 22 to 38 (FTASTQNNRTSKNTDSS) are enriched in polar residues.

This sequence belongs to the ORC2 family. ORC is composed of six subunits.

The protein localises to the nucleus. Component of the origin recognition complex (ORC) that binds origins of replication. DNA-binding is ATP-dependent, however specific DNA sequences that define origins of replication have not been identified so far. ORC is required to assemble the pre-replication complex necessary to initiate DNA replication. The sequence is that of Origin recognition complex subunit 2 (orcB) from Dictyostelium discoideum (Social amoeba).